Consider the following 478-residue polypeptide: Stromelysin-1 (478 aa).

Residues 1–17 (MQNLPALLLFCGVVCSA) form the signal peptide. Residues 18 to 99 (YPVDRAAEDE…PRCGVPDVGD (82 aa)) constitute a propeptide, activation peptide. The short motif at 90 to 97 (PRCGVPDV) is the Cysteine switch element. A Zn(2+)-binding site is contributed by C92. Ca(2+) contacts are provided by D124 and D158. 2 residues coordinate Zn(2+): H168 and D170. Ca(2+)-binding residues include D175, G176, G178, and V180. H183 lines the Zn(2+) pocket. Positions 190 and 194 each coordinate Ca(2+). H196 lines the Zn(2+) pocket. Residues D198, D199, and E201 each coordinate Ca(2+). H218 lines the Zn(2+) pocket. E219 is a catalytic residue. Zn(2+)-binding residues include H222 and H228. The tract at residues 260 to 286 (QSLYGGPPSDSSNDPVVPTESVPPGPG) is disordered. The span at 266–277 (PPSDSSNDPVVP) shows a compositional bias: low complexity. 4 Hemopexin repeats span residues 288-337 (PAAC…WPSL), 338-384 (PSGL…GFPP), 386-434 (VKKI…FPGV), and 435-478 (DSKV…WLNC). Residues C291 and C478 are joined by a disulfide bond. Residue D298 coordinates Ca(2+). Positions 390 and 439 each coordinate Ca(2+). N452 is a glycosylation site (N-linked (GlcNAc...) asparagine).

Belongs to the peptidase M10A family. Requires Ca(2+) as cofactor. Zn(2+) is required as a cofactor.

The protein resides in the secreted. Its subcellular location is the extracellular space. The protein localises to the extracellular matrix. It catalyses the reaction Preferential cleavage where P1', P2' and P3' are hydrophobic residues.. Metalloproteinase with a rather broad substrate specificity that can degrade fibronectin, laminin, gelatins of type I, III, IV, and V; collagens III, IV, X, and IX, and cartilage proteoglycans. Activates different molecules including growth factors, plasminogen or other matrix metalloproteinases such as MMP9. Once released into the extracellular matrix (ECM), the inactive pro-enzyme is activated by the plasmin cascade signaling pathway. Also acts intracellularly. For example, in dopaminergic neurons, gets activated by the serine protease HTRA2 upon stress and plays a pivotal role in DA neuronal degeneration by mediating microglial activation and alpha-synuclein/SNCA cleavage. In addition, plays a role in immune response and possesses antiviral activity against various viruses. Mechanistically, translocates from the cytoplasm into the cell nucleus upon virus infection to influence NF-kappa-B activities. The sequence is that of Stromelysin-1 (MMP3) from Canis lupus familiaris (Dog).